Here is a 184-residue protein sequence, read N- to C-terminus: Vacuolar protein sorting-associated protein 68 (184 aa).

N-acetylmethionine is present on Met1. Ser8 is modified (phosphoserine). A helical transmembrane segment spans residues 26–46; the sequence is GVYLSGALYALGFWIFLDAVL. Asn52 carries N-linked (GlcNAc...) asparagine glycosylation. A run of 3 helical transmembrane segments spans residues 56-76, 115-135, and 150-170; these read VHVT…TLIV, LFFG…VLII, and MGVN…VLWI.

The protein belongs to the UPF0220 family.

The protein localises to the vacuole membrane. It localises to the mitochondrion. In terms of biological role, involved in vacuolar protein sorting. This chain is Vacuolar protein sorting-associated protein 68 (VPS68), found in Saccharomyces cerevisiae (strain ATCC 204508 / S288c) (Baker's yeast).